The following is a 62-amino-acid chain: Photosystem II reaction center protein Z (62 aa).

The next 2 membrane-spanning stretches (helical) occupy residues 8–28 (AVFA…VVLA) and 41–61 (FSGA…NSLI).

It belongs to the PsbZ family. As to quaternary structure, PSII is composed of 1 copy each of membrane proteins PsbA, PsbB, PsbC, PsbD, PsbE, PsbF, PsbH, PsbI, PsbJ, PsbK, PsbL, PsbM, PsbT, PsbY, PsbZ, Psb30/Ycf12, at least 3 peripheral proteins of the oxygen-evolving complex and a large number of cofactors. It forms dimeric complexes.

The protein resides in the plastid. It is found in the chloroplast thylakoid membrane. Functionally, may control the interaction of photosystem II (PSII) cores with the light-harvesting antenna, regulates electron flow through the 2 photosystem reaction centers. PSII is a light-driven water plastoquinone oxidoreductase, using light energy to abstract electrons from H(2)O, generating a proton gradient subsequently used for ATP formation. In Huperzia lucidula (Shining clubmoss), this protein is Photosystem II reaction center protein Z.